Consider the following 358-residue polypeptide: Protein-arginine kinase (358 aa).

Residues 23 to 250 (VWPVTTFSLA…SKLSVAEVAA (228 aa)) form the Phosphagen kinase C-terminal domain. Residues 26–30 (VTTFS), 174–178 (KSQCF), and 203–208 (SSLLLG) each bind ATP.

It belongs to the ATP:guanido phosphotransferase family.

The catalysed reaction is L-arginyl-[protein] + ATP = N(omega)-phospho-L-arginyl-[protein] + ADP + H(+). In terms of biological role, catalyzes the specific phosphorylation of arginine residues in proteins. This Chlamydia pneumoniae (Chlamydophila pneumoniae) protein is Protein-arginine kinase.